Here is a 365-residue protein sequence, read N- to C-terminus: GTPase Obg (365 aa).

In terms of domain architecture, Obg spans 1 to 159 (MKFIDEARIE…RMLKLELKVL (159 aa)). The 175-residue stretch at 160–334 (ADVGLLGMPN…LIYAIKDHLQ (175 aa)) folds into the OBG-type G domain. Residues 166 to 173 (GMPNAGKS), 191 to 195 (FTTLH), 213 to 216 (DIPG), 284 to 287 (NKLD), and 315 to 317 (SAL) each bind GTP. Residues Ser173 and Thr193 each coordinate Mg(2+).

The protein belongs to the TRAFAC class OBG-HflX-like GTPase superfamily. OBG GTPase family. Monomer. The cofactor is Mg(2+).

Its subcellular location is the cytoplasm. Functionally, an essential GTPase which binds GTP, GDP and possibly (p)ppGpp with moderate affinity, with high nucleotide exchange rates and a fairly low GTP hydrolysis rate. Plays a role in control of the cell cycle, stress response, ribosome biogenesis and in those bacteria that undergo differentiation, in morphogenesis control. The chain is GTPase Obg from Cupriavidus necator (strain ATCC 17699 / DSM 428 / KCTC 22496 / NCIMB 10442 / H16 / Stanier 337) (Ralstonia eutropha).